A 181-amino-acid polypeptide reads, in one-letter code: ATP synthase subunit b 2 (181 aa).

The segment covering Met-1 to Gly-18 has biased composition (low complexity). Positions Met-1 to Ser-20 are disordered. Residues Ile-34–Pro-54 traverse the membrane as a helical segment.

It belongs to the ATPase B chain family. As to quaternary structure, F-type ATPases have 2 components, F(1) - the catalytic core - and F(0) - the membrane proton channel. F(1) has five subunits: alpha(3), beta(3), gamma(1), delta(1), epsilon(1). F(0) has three main subunits: a(1), b(2) and c(10-14). The alpha and beta chains form an alternating ring which encloses part of the gamma chain. F(1) is attached to F(0) by a central stalk formed by the gamma and epsilon chains, while a peripheral stalk is formed by the delta and b chains.

The protein resides in the cell inner membrane. F(1)F(0) ATP synthase produces ATP from ADP in the presence of a proton or sodium gradient. F-type ATPases consist of two structural domains, F(1) containing the extramembraneous catalytic core and F(0) containing the membrane proton channel, linked together by a central stalk and a peripheral stalk. During catalysis, ATP synthesis in the catalytic domain of F(1) is coupled via a rotary mechanism of the central stalk subunits to proton translocation. Functionally, component of the F(0) channel, it forms part of the peripheral stalk, linking F(1) to F(0). The b'-subunit is a diverged and duplicated form of b found in plants and photosynthetic bacteria. This chain is ATP synthase subunit b 2 (atpF2), found in Ruegeria sp. (strain TM1040) (Silicibacter sp.).